Consider the following 276-residue polypeptide: Omega-amidase NIT2 (276 aa).

One can recognise a CN hydrolase domain in the interval 4-248 (FRLALIQLQI…EAIVYSDIDL (245 aa)). Position 26 is a phosphoserine (Ser26). The active-site Proton acceptor is Glu43. Lys68 carries the post-translational modification N6-acetyllysine; alternate. Residue Lys68 is modified to N6-succinyllysine; alternate. Residue Lys112 is the Proton donor of the active site. N6-succinyllysine is present on residues Lys123 and Lys130. Cys153 (nucleophile) is an active-site residue.

Homodimer. In terms of tissue distribution, detected in fetal brain (at protein level). Ubiquitous. Detected in heart, brain, placenta, lung, liver, skeletal muscle, kidney, pancreas, prostate, spleen, thymus, prostate, testis, ovary, small intestine and colon.

The protein localises to the cytoplasm. The enzyme catalyses a monoamide of a dicarboxylate + H2O = a dicarboxylate + NH4(+). It carries out the reaction 2-oxoglutaramate + H2O = 2-oxoglutarate + NH4(+). It catalyses the reaction 2-oxosuccinamate + H2O = oxaloacetate + NH4(+). Functionally, has omega-amidase activity. The role of omega-amidase is to remove potentially toxic intermediates by converting 2-oxoglutaramate and 2-oxosuccinamate to biologically useful 2-oxoglutarate and oxaloacetate, respectively. The chain is Omega-amidase NIT2 (NIT2) from Homo sapiens (Human).